Here is a 412-residue protein sequence, read N- to C-terminus: Transcription factor IIIA (412 aa).

The segment at 1-20 (MSESDETKSISSLISSSSSS) is disordered. Low complexity predominate over residues 9-20 (SISSLISSSSSS). 7 consecutive C2H2-type zinc fingers follow at residues 25–49 (YICT…LRTH), 55–79 (YKCT…IVSH), 85–107 (FHCS…EITH), 111–136 (FKCT…LSVH), 140–162 (LTCK…KLKH), 169–194 (YQCD…KQSH), and 197–219 (LKCP…MLSH). Residues 228 to 252 (WTCDYCDVGKFAKKNELVEHYNIFH) form a C2H2-type 8; degenerate zinc finger. Positions 285–316 (LETEKLKVEEDEEDEEDSLDEKRSDVRSDSMS) are disordered. The segment covering 293–303 (EEDEEDEEDSL) has biased composition (acidic residues). The C2H2-type 9 zinc finger occupies 345-369 (INCPKNNCDRMFSREYDLRRHLKWH).

Its subcellular location is the nucleus. Functionally, transcription factor required for transcription of 5S rRNA by RNA polymerase III. The chain is Transcription factor IIIA (PZF1) from Candida albicans (strain SC5314 / ATCC MYA-2876) (Yeast).